The following is a 347-amino-acid chain: Fe(2+) transport protein 1 (347 aa).

The signal sequence occupies residues 1-22; it reads MASNSALLMKTIFLVLIFVSFA. At 23 to 52 the chain is on the extracellular side; that stretch reads ISPATSTAPEECGSESANPCVNKAKALPLK. Residues 53–73 traverse the membrane as a helical segment; it reads VIAIFVILIASMIGVGAPLFS. Residues 74 to 84 are Cytoplasmic-facing; the sequence is RNVSFLQPDGN. The chain crosses the membrane as a helical span at residues 85-105; that stretch reads IFTIIKCFASGIILGTGFMHV. Residues 106–125 are Extracellular-facing; that stretch reads LPDSFEMLSSICLEENPWHK. A helical membrane pass occupies residues 126-146; that stretch reads FPFSGFLAMLSGLITLAIDSM. At 147–192 the chain is on the cytoplasmic side; it reads ATSLYTSKNAVGIMPHGHGHGHGPANDVTLPIKEDDSSNAQLLRYR. Residues Lys-154 and Lys-179 each participate in a glycyl lysine isopeptide (Lys-Gly) (interchain with G-Cter in ubiquitin) cross-link. Residues 193-213 traverse the membrane as a helical segment; that stretch reads VIAMVLELGIIVHSVVIGLSL. Residues 214–224 lie on the Extracellular side of the membrane; it reads GATSDTCTIKG. The chain crosses the membrane as a helical span at residues 225 to 245; sequence LIAALCFHQMFEGMGLGGCIL. The Cytoplasmic segment spans residues 246–254; that stretch reads QAEYTNMKK. A helical transmembrane segment spans residues 255-275; the sequence is FVMAFFFAVTTPFGIALGIAL. Residues 276–286 are Extracellular-facing; it reads STVYQDNSPKA. Residues 287–307 traverse the membrane as a helical segment; that stretch reads LITVGLLNACSAGLLIYMALV. Residues 308–326 lie on the Cytoplasmic side of the membrane; the sequence is DLLAAEFMGPKLQGSIKMQ. The chain crosses the membrane as a helical span at residues 327 to 347; sequence FKCLIAALLGCGGMSIIAKWA.

Belongs to the ZIP transporter (TC 2.A.5) family. As to quaternary structure, interacts with FREE1. Monoubiquitinated on several Lys residues. Monoubiquitination controls trafficking from the plasma membrane and targeting to the vacuole. In terms of tissue distribution, expressed in the external cell layers of the root including the lateral branching zone. Also detected in flowers before pollination.

The protein localises to the cell membrane. It localises to the early endosome. The protein resides in the golgi apparatus. It is found in the trans-Golgi network. Its subcellular location is the vacuole. Its function is as follows. High-affinity iron transporter that plays a key role in the uptake of iron from the rhizosphere across the plasma membrane in the root epidermal layer. Acts as the principal regulator of iron homeostasis in planta. Also mediates the heavy metals uptake under iron-deficiency by its ability to transport cobalt, cadmium, manganese and/or zinc ions. The polypeptide is Fe(2+) transport protein 1 (IRT1) (Arabidopsis thaliana (Mouse-ear cress)).